The primary structure comprises 1189 residues: Origin recognition complex subunit 1 (1189 aa).

Positions 1–53 (MTPKKKIFQNFQANDNEILSPTKKGIKLNVSKLNILNFENTIITKEKTNYEYK) are required for peripherial nuclear localization. Residue Thr2 is modified to Phosphothreonine. Ser20 is modified (phosphoserine). 4 Leucine heptad repeat repeats span residues 137–143 (LTNISSS), 144–150 (LTNISSS), 151–157 (LTNISSS), and 158–164 (LSNSLDE). Over residues 239-248 (KKNISKKNTH) the composition is skewed to basic residues. Disordered stretches follow at residues 239–421 (KKNI…DHTD) and 679–749 (DTQA…QSSL). The segment covering 254-279 (QNDKNKEKNKEKDKNIKKDRDKDIQT) has biased composition (basic and acidic residues). Positions 304–320 (NNDNVKNNLKNNINNNN) are enriched in low complexity. Over residues 321 to 339 (TLKRSSQSVRIDSDLSSAH) the composition is skewed to polar residues. Residues 353–381 (HRNNNNNNNNNNKTTSNNHNKNNKINNNN) show a composition bias toward low complexity. A compositionally biased stretch (basic and acidic residues) spans 385-394 (NYKKQTDTKH). Positions 395–411 (TNNTQNNKYNKTKTTNT) are enriched in low complexity. A compositionally biased stretch (polar residues) spans 695–709 (KAQTTTNVKANTHTK). 2 stretches are compositionally biased toward basic and acidic residues: residues 710–724 (TLNDHNKSKTTKNKE) and 733–742 (DVKKKSDPHN). ATP is bound by residues Val780 and 815–823 (GMPGTGKTA). Mg(2+) is bound by residues Asp903 and Glu904. Glu904 is an ATP binding site. Residues 913 to 922 (QKVLFTLFDW) carry the PIP-box motif. Residues Asn937 and Arg1003 each contribute to the ATP site.

This sequence belongs to the ORC1 family. Component of the origin recognition complex (ORC). Interacts (via PIP-box) with PCNA1; the interaction occurs during DNA replication in trophozoites. Post-translationally, in schizonts, may be phosphorylated by PK5; phosphorylation leads to ORC1 dissociation from the telomeres and var gene promoters, translocation to the cytoplasm, where it is degraded by the proteasome.

It is found in the nucleus. Its subcellular location is the chromosome. The protein resides in the telomere. The protein localises to the nucleolus. The catalysed reaction is ATP + H2O = ADP + phosphate + H(+). Component of the origin recognition complex (ORC) that binds origins of replication and thus may regulate the initiation of DNA replication. DNA-binding may not be ATP-dependent. In a SIR2A/Sir2-dependent manner, binds to and silences telomers and subtelomeric repeat regions (TAREs). In a SIR2A/Sir2-dependent manner, binds to promoters of var genes localized next to TAREs resulting in their silencing. This Plasmodium falciparum (isolate 3D7) protein is Origin recognition complex subunit 1.